The chain runs to 421 residues: ATP-dependent RNA helicase RhlB (421 aa).

Residues 9–37 (QKFSDFALHPKVVEALEKKGFHNCTPIQA) carry the Q motif motif. Positions 40 to 219 (LPLTLAGRDV…FEQMNNAEYI (180 aa)) constitute a Helicase ATP-binding domain. 53 to 60 (AQTGTGKT) contacts ATP. Residues 165–168 (DEAD) carry the DEAD box motif. The Helicase C-terminal domain maps to 245–390 (RLLQTLIEEE…VSKYNPDALM (146 aa)). The interval 392–421 (DLPKPLRLTRPRTGNGPRRTGAPRNRRRSG) is disordered. The span at 402–414 (PRTGNGPRRTGAP) shows a compositional bias: low complexity.

Belongs to the DEAD box helicase family. RhlB subfamily. As to quaternary structure, component of the RNA degradosome, which is a multiprotein complex involved in RNA processing and mRNA degradation.

The protein resides in the cytoplasm. The enzyme catalyses ATP + H2O = ADP + phosphate + H(+). Functionally, DEAD-box RNA helicase involved in RNA degradation. Has RNA-dependent ATPase activity and unwinds double-stranded RNA. In Escherichia coli O157:H7, this protein is ATP-dependent RNA helicase RhlB.